Reading from the N-terminus, the 815-residue chain is Leucine--tRNA ligase (815 aa).

Residues 40–50 (PYPSGRIHMGH) carry the 'HIGH' region motif. The 'KMSKS' region signature appears at 583 to 587 (KMSKS). Lys586 serves as a coordination point for ATP.

Belongs to the class-I aminoacyl-tRNA synthetase family.

It localises to the cytoplasm. It catalyses the reaction tRNA(Leu) + L-leucine + ATP = L-leucyl-tRNA(Leu) + AMP + diphosphate. The sequence is that of Leucine--tRNA ligase from Nitratiruptor sp. (strain SB155-2).